The primary structure comprises 249 residues: Ubiquinone biosynthesis O-methyltransferase (249 aa).

Residues Arg41, Gly72, Asp93, and Met136 each coordinate S-adenosyl-L-methionine.

This sequence belongs to the methyltransferase superfamily. UbiG/COQ3 family.

The enzyme catalyses a 3-demethylubiquinol + S-adenosyl-L-methionine = a ubiquinol + S-adenosyl-L-homocysteine + H(+). It carries out the reaction a 3-(all-trans-polyprenyl)benzene-1,2-diol + S-adenosyl-L-methionine = a 2-methoxy-6-(all-trans-polyprenyl)phenol + S-adenosyl-L-homocysteine + H(+). It functions in the pathway cofactor biosynthesis; ubiquinone biosynthesis. Its function is as follows. O-methyltransferase that catalyzes the 2 O-methylation steps in the ubiquinone biosynthetic pathway. In Mesorhizobium japonicum (strain LMG 29417 / CECT 9101 / MAFF 303099) (Mesorhizobium loti (strain MAFF 303099)), this protein is Ubiquinone biosynthesis O-methyltransferase.